A 201-amino-acid polypeptide reads, in one-letter code: Recombination protein RecR (201 aa).

A C4-type zinc finger spans residues 60-75 (CSTCGNVDTADPCMIC). The Toprim domain occupies 83 to 178 (GTIIVVEDVS…KVTRLAHGVP (96 aa)).

Belongs to the RecR family.

In terms of biological role, may play a role in DNA repair. It seems to be involved in an RecBC-independent recombinational process of DNA repair. It may act with RecF and RecO. The sequence is that of Recombination protein RecR from Mesorhizobium japonicum (strain LMG 29417 / CECT 9101 / MAFF 303099) (Mesorhizobium loti (strain MAFF 303099)).